A 317-amino-acid chain; its full sequence is Long form salivary protein D7L2 (317 aa).

A signal peptide spans 1-20 (MYKLLVALHLILCTVSHVKT). Intrachain disulfides connect C39/C76, C72/C131, C181/C214, C195/C316, and C255/C266. W58 and Y73 together coordinate thromboxane A2. Serotonin-binding residues include E182, Y264, D281, D284, and M308.

This sequence belongs to the PBP/GOBP family. Female salivary gland.

The protein localises to the secreted. In terms of biological role, modulates blood feeding of female mosquitoes on vertebrate species by binding and sequestering different mediators involved in the host response, such as biogenic amines and eicosanoids. Binds serotonin with high affinity. Binds tryptamine, octopamine, dopamine and noradrenaline with low affinity. Binds leukotriene C4, leukotriene D4, leukotriene E4 and U-46619, a stable analog of thromboxane A2. Does not bind leukotriene B4, adrenaline, histamine and ADP. Inhibits platelet aggregation induced by low concentrations of collagen and arachidonic acid but not by ADP or adrenaline. The chain is Long form salivary protein D7L2 from Anopheles darlingi (Mosquito).